The primary structure comprises 413 residues: MASKKLKYKTDFDKCVLTDNFAARGWTRCGDKDDDDWNIYWATVWNVRNIFNPKSGIRLNDMQIINHFPNHYELTRKDLMVKNFKRYKKELEKENSPYCQKDENGNYLYLDFIPQTFTLPGEYSLFVEEFHRNPNATWIVKPASRSQGKGIFLLRKIQQLKKIGGGTNSNPLQAFSLKEAYVVSRYIDNPLLVGGRKFDLRIYALVTSYRPLKVYLYAMGFGRFCNEQYTQDIAEMDNMFIHLTNVAIQKFSDKYSEKHGGKWSLQSLRYYLEMVYGTDMANKCFDDINNIIIMSLKSVQSIIINDKHCFEMYGYDILIDENCKPWLIEINASPSLTVTGKIDKELKTELIKNVYQIVIPDDWNDDSSKTGANTSTQTKVGDFNILYDEAQEKKISQQQQQQKKNINSKTIWK.

The TTL domain maps to 2-370 (ASKKLKYKTD…DDWNDDSSKT (369 aa)). ATP contacts are provided by residues 184–187 (SRYI), Lys-197, and Asp-199.

It belongs to the tubulin polyglutamylase family.

It is found in the cytoplasm. The protein resides in the cytoskeleton. It localises to the cilium basal body. Its subcellular location is the contractile vacuole. In terms of biological role, probable tubulin polyglutamylase with a strong preference for alpha-tubulin. Modifies alpha-tubulin, generating side chains of glutamate on the gamma-carboxyl groups of specific glutamate residues within the C-terminal tail of alpha-tubulin. This Tetrahymena thermophila (strain SB210) protein is Probable alpha-tubulin polyglutamylase Ttll1 (Ttll1).